Here is a 176-residue protein sequence, read N- to C-terminus: NAD(P)H-quinone oxidoreductase subunit J (176 aa).

The protein belongs to the complex I 30 kDa subunit family. As to quaternary structure, NDH-1 can be composed of about 15 different subunits; different subcomplexes with different compositions have been identified which probably have different functions.

The protein localises to the cellular thylakoid membrane. The enzyme catalyses a plastoquinone + NADH + (n+1) H(+)(in) = a plastoquinol + NAD(+) + n H(+)(out). It carries out the reaction a plastoquinone + NADPH + (n+1) H(+)(in) = a plastoquinol + NADP(+) + n H(+)(out). Its function is as follows. NDH-1 shuttles electrons from an unknown electron donor, via FMN and iron-sulfur (Fe-S) centers, to quinones in the respiratory and/or the photosynthetic chain. The immediate electron acceptor for the enzyme in this species is believed to be plastoquinone. Couples the redox reaction to proton translocation, and thus conserves the redox energy in a proton gradient. Cyanobacterial NDH-1 also plays a role in inorganic carbon-concentration. The polypeptide is NAD(P)H-quinone oxidoreductase subunit J (Prochlorococcus marinus (strain MIT 9515)).